Reading from the N-terminus, the 382-residue chain is Homoserine O-succinyltransferase (382 aa).

Residues Asn51–Leu359 form the AB hydrolase-1 domain. Ser157 serves as the catalytic Nucleophile. Arg227 serves as a coordination point for substrate. Residues Asp322 and His355 contribute to the active site. Asp356 lines the substrate pocket.

Belongs to the AB hydrolase superfamily. MetX family. As to quaternary structure, homodimer.

Its subcellular location is the cytoplasm. The catalysed reaction is L-homoserine + succinyl-CoA = O-succinyl-L-homoserine + CoA. It participates in amino-acid biosynthesis; L-methionine biosynthesis via de novo pathway; O-succinyl-L-homoserine from L-homoserine: step 1/1. Transfers a succinyl group from succinyl-CoA to L-homoserine, forming succinyl-L-homoserine. In Marinobacter nauticus (strain ATCC 700491 / DSM 11845 / VT8) (Marinobacter aquaeolei), this protein is Homoserine O-succinyltransferase.